A 288-amino-acid chain; its full sequence is Fibroblast growth factor 2 (288 aa).

The segment at 1-133 is disordered; sequence MVGVGGGDVE…RGSRPGPAGT (133 aa). A propeptide spans 1–142 (or 93, or 124, or 125, or 131, or 161); the sequence is MVGVGGGDVE…TMAAGSITTL (142 aa). The segment covering 52–64 has biased composition (low complexity); the sequence is SVNPRSRAAGSPR. Positions 68-84 are enriched in basic and acidic residues; it reads RRTEERPSGSRLGDRGR. 3 positions are modified to omega-N-methylarginine; alternate: Arg-108, Arg-110, and Arg-112. A symmetric dimethylarginine; alternate mark is found at Arg-108, Arg-110, and Arg-112. Residues 113–132 are compositionally biased toward low complexity; it reads GTAAPRAAPAARGSRPGPAG. Asn-169 serves as a coordination point for heparin. The Cell attachment site; atypical signature appears at 179–181; the sequence is DGR. Phosphotyrosine; by TEC is present on Tyr-215. The short motif at 221–223 is the Cell attachment site; atypical element; that stretch reads DGR. Residue Lys-228 forms a Glycyl lysine isopeptide (Lys-Gly) (interchain with G-Cter in SUMO1) linkage. The interval 261-277 is heparin-binding; it reads KRTGQYKLGSKTGPGQK.

It belongs to the heparin-binding growth factors family. As to quaternary structure, monomer. Homodimer. Interacts with FGFR1, FGFR2, FGFR3 and FGFR4. Affinity between fibroblast growth factors (FGFs) and their receptors is increased by heparan sulfate glycosaminoglycans that function as coreceptors. Interacts with CSPG4, FGFBP1 and TEC. Found in a complex with FGFBP1, FGF1 and FGF2. Interacts with FGFBP3. Interacts with integrin ITGAV:ITGB3; the interaction is required for FGF2 signaling. Interacts with SNORC (via the extracellular domain). Interacts with glypican GPC3. In terms of processing, phosphorylation at Tyr-215 regulates FGF2 unconventional secretion. Several N-termini starting at positions 94, 125, 126, 132, 143 and 162 have been identified by direct sequencing. As to expression, expressed in granulosa and cumulus cells. Expressed in hepatocellular carcinoma cells, but not in non-cancerous liver tissue.

It is found in the secreted. The protein resides in the nucleus. Acts as a ligand for FGFR1, FGFR2, FGFR3 and FGFR4. Also acts as an integrin ligand which is required for FGF2 signaling. Binds to integrin ITGAV:ITGB3. Plays an important role in the regulation of cell survival, cell division, cell differentiation and cell migration. Functions as a potent mitogen in vitro. Can induce angiogenesis. Mediates phosphorylation of ERK1/2 and thereby promotes retinal lens fiber differentiation. The protein is Fibroblast growth factor 2 (FGF2) of Homo sapiens (Human).